Reading from the N-terminus, the 569-residue chain is Cytosolic purine 5'-nucleotidase (569 aa).

The Nucleophile role is filled by aspartate 52. Aspartate 52 and aspartate 54 together coordinate IMP. Residues aspartate 52 and aspartate 54 each coordinate Mg(2+). Residue aspartate 54 is the Proton donor of the active site. Residues arginine 144 and asparagine 154 each coordinate ATP. IMP contacts are provided by arginine 202, aspartate 206, lysine 215, threonine 249, asparagine 250, serine 251, and lysine 292. Mg(2+) is bound at residue aspartate 351. The ATP site is built by glutamine 453 and arginine 456. The tract at residues 527–569 (SISEIKPPNLFPQAPQEITHCHDEDDDEEEEEEEVEEEEEEEE) is disordered. The interval 548-569 (HDEDDDEEEEEEEVEEEEEEEE) is required for tetramer assembly. Over residues 550 to 569 (EDDDEEEEEEEVEEEEEEEE) the composition is skewed to acidic residues.

Belongs to the 5'(3')-deoxyribonucleotidase family. Homotetramer. The cofactor is Mg(2+).

The protein resides in the cytoplasm. Its subcellular location is the cytosol. The catalysed reaction is a ribonucleoside 5'-phosphate + H2O = a ribonucleoside + phosphate. It carries out the reaction a 2'-deoxyribonucleoside + a ribonucleoside 5'-phosphate = a ribonucleoside + a 2'-deoxyribonucleoside 5'-phosphate. The enzyme catalyses IMP + H2O = inosine + phosphate. It catalyses the reaction GMP + H2O = guanosine + phosphate. The catalysed reaction is dGMP + H2O = 2'-deoxyguanosine + phosphate. It carries out the reaction dIMP + H2O = 2'-deoxyinosine + phosphate. The enzyme catalyses XMP + H2O = xanthosine + phosphate. It catalyses the reaction inosine + GMP = guanosine + IMP. The catalysed reaction is dGMP + inosine = 2'-deoxyguanosine + IMP. It carries out the reaction dIMP + inosine = 2'-deoxyinosine + IMP. The enzyme catalyses inosine + UMP = uridine + IMP. It catalyses the reaction inosine + CMP = cytidine + IMP. The catalysed reaction is inosine + AMP = IMP + adenosine. Its activity is regulated as follows. Allosterically activated by various compounds including ATP, 2,3-BPG/2,3-Bisphosphoglyceric acid and Ap4A/P1,P4-bis(5'-adenosyl) tetraphosphate. Binding of an allosteric activator is a prerequisiste to magnesium and substrate binding. Inhibited by inorganic phosphate. Inhibited by inosine, guanosine, p-chloromercuribenzoate and NaF. Broad specificity cytosolic 5'-nucleotidase that catalyzes the dephosphorylation of 6-hydroxypurine nucleoside 5'-monophosphates. In addition, possesses a phosphotransferase activity by which it can transfer a phosphate from a donor nucleoside monophosphate to an acceptor nucleoside, preferably inosine, deoxyinosine and guanosine. Has the highest activities for IMP and GMP followed by dIMP, dGMP and XMP. Could also catalyze the transfer of phosphates from pyrimidine monophosphates but with lower efficiency. Through these activities regulates the purine nucleoside/nucleotide pools within the cell. The chain is Cytosolic purine 5'-nucleotidase (NT5C2) from Gallus gallus (Chicken).